The following is a 635-amino-acid chain: Dihydrolipoyllysine-residue acetyltransferase component of pyruvate dehydrogenase complex, mitochondrial (635 aa).

Residues 83–160 (GKEITMPALS…EINKPIAIIV (78 aa)) enclose the Lipoyl-binding 1 domain. Lysine 124 is subject to N6-lipoyllysine. The interval 171-204 (KNYKPSSQASSTPVQEEAPKPKQEAPKKSTKTYP) is disordered. Residues 174–184 (KPSSQASSTPV) show a composition bias toward polar residues. The segment covering 187-197 (EAPKPKQEAPK) has biased composition (basic and acidic residues). The region spanning 206-283 (HKVVGMPALS…QINQPVCIIV (78 aa)) is the Lipoyl-binding 2 domain. An N6-lipoyllysine modification is found at lysine 247. Positions 295 to 338 (YSVEEQSSSSSSSSQESTPSSSSSSSQESTPSQSSSQQTTRKSG) are disordered. A compositionally biased stretch (low complexity) spans 298–334 (EEQSSSSSSSSQESTPSSSSSSSQESTPSQSSSQQTT). Residues 342–379 (FATPAARFEASSKGYDLSAINGTGPNNRILKADVLEFV) enclose the Peripheral subunit-binding (PSBD) domain. The tract at residues 382–413 (KQEVAQQQQQQTTTTTKKPTTPTSSGEFTDIP) is disordered. Residues 387–404 (QQQQQQTTTTTKKPTTPT) are compositionally biased toward low complexity. The segment at 403 to 635 (PTSSGEFTDI…YVENPIKLIL (233 aa)) is catalytic.

This sequence belongs to the 2-oxoacid dehydrogenase family. 20 to 30 alpha(2)-beta(2) tetramers of E1 + 6 homodimers of E3 + 60 copies of E2. The cofactor is (R)-lipoate.

Its subcellular location is the mitochondrion matrix. The catalysed reaction is N(6)-[(R)-dihydrolipoyl]-L-lysyl-[protein] + acetyl-CoA = N(6)-[(R)-S(8)-acetyldihydrolipoyl]-L-lysyl-[protein] + CoA. Functionally, the pyruvate dehydrogenase complex catalyzes the overall conversion of pyruvate to acetyl-CoA and CO(2). It contains multiple copies of three enzymatic components: pyruvate dehydrogenase (E1), dihydrolipoamide acetyltransferase (E2) and lipoamide dehydrogenase (E3). In Dictyostelium discoideum (Social amoeba), this protein is Dihydrolipoyllysine-residue acetyltransferase component of pyruvate dehydrogenase complex, mitochondrial (pdhC).